We begin with the raw amino-acid sequence, 55 residues long: Protein CADMIUM TOLERANCE 1 (55 aa).

Residues 24–40 traverse the membrane as a helical segment; sequence GCLYACIFTALCCFCCY.

Belongs to the CYSTM1 family. In terms of tissue distribution, expressed in roots and shoots.

The protein resides in the cell membrane. The protein localises to the secreted. It localises to the cell wall. Confers resistance to heavy metal ions (e.g. cadmium (CdCl(2)) and copper (CuCl(2))) by chelating them at the plasma membrane of root cells, thus stopping their entry and reducing their accumulation. Binds to aluminium (Al). This is Protein CADMIUM TOLERANCE 1 from Oryza sativa subsp. japonica (Rice).